Here is a 227-residue protein sequence, read N- to C-terminus: DNA repair protein RecO (227 aa).

Belongs to the RecO family.

Its function is as follows. Involved in DNA repair and RecF pathway recombination. The protein is DNA repair protein RecO of Pseudomonas putida (strain ATCC 700007 / DSM 6899 / JCM 31910 / BCRC 17059 / LMG 24140 / F1).